We begin with the raw amino-acid sequence, 89 residues long: Large ribosomal subunit protein bL27 (89 aa).

A disordered region spans residues 1-22 (MAHKKAGGSSRNGRDSESKRLG).

The protein belongs to the bacterial ribosomal protein bL27 family.

The chain is Large ribosomal subunit protein bL27 from Bartonella henselae (strain ATCC 49882 / DSM 28221 / CCUG 30454 / Houston 1) (Rochalimaea henselae).